Reading from the N-terminus, the 201-residue chain is Probable nicotinate-nucleotide adenylyltransferase (201 aa).

Belongs to the NadD family.

The enzyme catalyses nicotinate beta-D-ribonucleotide + ATP + H(+) = deamido-NAD(+) + diphosphate. Its pathway is cofactor biosynthesis; NAD(+) biosynthesis; deamido-NAD(+) from nicotinate D-ribonucleotide: step 1/1. Functionally, catalyzes the reversible adenylation of nicotinate mononucleotide (NaMN) to nicotinic acid adenine dinucleotide (NaAD). This chain is Probable nicotinate-nucleotide adenylyltransferase, found in Bacteroides fragilis (strain YCH46).